Consider the following 352-residue polypeptide: Ketol-acid reductoisomerase (NAD(+)) (352 aa).

The KARI N-terminal Rossmann domain maps to 11-199; that stretch reads ENVVTSEEFT…AIGSGYLFPT (189 aa). NAD(+) is bound by residues 38–41 and 100–103; these read YGVQ and DAGQ. Histidine 124 is an active-site residue. An NAD(+)-binding site is contributed by glycine 153. In terms of domain architecture, KARI C-terminal knotted spans 200–347; sequence TFEKEVFSDL…AAVRALRPEN (148 aa). Residues aspartate 208, glutamate 212, glutamate 244, and glutamate 248 each coordinate Mg(2+). Serine 270 lines the substrate pocket.

This sequence belongs to the ketol-acid reductoisomerase family. It depends on Mg(2+) as a cofactor.

It catalyses the reaction (2R)-2,3-dihydroxy-3-methylbutanoate + NAD(+) = (2S)-2-acetolactate + NADH + H(+). The protein operates within amino-acid biosynthesis; L-isoleucine biosynthesis; L-isoleucine from 2-oxobutanoate: step 2/4. It functions in the pathway amino-acid biosynthesis; L-valine biosynthesis; L-valine from pyruvate: step 2/4. Functionally, involved in the biosynthesis of branched-chain amino acids (BCAA). Catalyzes an alkyl-migration followed by a ketol-acid reduction of (S)-2-acetolactate (S2AL) to yield (R)-2,3-dihydroxy-isovalerate. In the isomerase reaction, S2AL is rearranged via a Mg-dependent methyl migration to produce 3-hydroxy-3-methyl-2-ketobutyrate (HMKB). In the reductase reaction, this 2-ketoacid undergoes a metal-dependent reduction by NADH to yield (R)-2,3-dihydroxy-isovalerate. This chain is Ketol-acid reductoisomerase (NAD(+)), found in Desulfosudis oleivorans (strain DSM 6200 / JCM 39069 / Hxd3) (Desulfococcus oleovorans).